Consider the following 370-residue polypeptide: MSLHQFLLEPITCHAWNRDRTQIALSPNNHEVHIYKKNGSQWTKAHELKEHNGHITGIDWAPKSDRIVTCGADRNAYVWSQKDGIWKPTLVILRINRAATFVKWSPLENKFAVGSGARLISVCYFESENDWWVSKHIKKPIRSTVLSLDWHPNNVLLAAGSCDFKCRVFSAYIKEVDEKPASTPWGSKMPFGQLMSEFGGSGTGGWVHGVSFSASGNRLAWVSHDSTVSVADASKSVQVSTLRTEFLPLLSVSFVSENSVVAAGHDCCPMLFNYDDRGCLTFVSKLDVPKQSIQRNMSAMERFRNMDKRATTEDRNTALETLHQNSITQVSIYEVDKQDCRKFCTTGIDGAMTIWDFKTLESSIQGLRIM.

WD repeat units follow at residues 6–45 (FLLEPITCHAWNRDRTQIALSPNNHEVHIYKKNGSQWTKA), 50–89 (EHNGHITGIDWAPKSDRIVTCGADRNAYVWSQKDGIWKPT), 140–179 (PIRSTVLSLDWHPNNVLLAAGSCDFKCRVFSAYIKEVDEK), 202–241 (GTGGWVHGVSFSASGNRLAWVSHDSTVSVADASKSVQVST), 244–284 (TEFL…TFVS), and 322–365 (LHQN…SSIQ).

This sequence belongs to the WD repeat ARPC1 family. In terms of assembly, probable component of the Arp2/3 complex in which it may replace ARPC1B.

Its subcellular location is the cytoplasm. It localises to the cytoskeleton. The protein localises to the nucleus. Functionally, probably functions as a component of the Arp2/3 complex which is involved in regulation of actin polymerization and together with an activating nucleation-promoting factor (NPF) mediates the formation of branched actin networks. In addition to its role in the cytoplasmic cytoskeleton, the Arp2/3 complex also promotes actin polymerization in the nucleus, thereby regulating gene transcription and repair of damaged DNA. This chain is Actin-related protein 2/3 complex subunit 1A (Arpc1a), found in Mus musculus (Mouse).